The sequence spans 682 residues: Potassium-transporting ATPase ATP-binding subunit (682 aa).

Transmembrane regions (helical) follow at residues 34–54 (PVMF…IAMA), 62–82 (ALFS…ANFA), 219–239 (IALT…TATL), and 254–274 (VLVA…LSAI). The 4-aspartylphosphate intermediate role is filled by Asp-307. Residues Asp-344, Glu-348, 377–384 (FTAQSRMS), and Lys-395 contribute to the ATP site. Mg(2+)-binding residues include Asp-518 and Asp-522. Helical transmembrane passes span 588–608 (FAII…LNIM), 616–636 (AILS…PLAL), and 656–676 (IYGL…DLLL).

This sequence belongs to the cation transport ATPase (P-type) (TC 3.A.3) family. Type IA subfamily. In terms of assembly, the system is composed of three essential subunits: KdpA, KdpB and KdpC.

It is found in the cell inner membrane. It catalyses the reaction K(+)(out) + ATP + H2O = K(+)(in) + ADP + phosphate + H(+). Functionally, part of the high-affinity ATP-driven potassium transport (or Kdp) system, which catalyzes the hydrolysis of ATP coupled with the electrogenic transport of potassium into the cytoplasm. This subunit is responsible for energy coupling to the transport system and for the release of the potassium ions to the cytoplasm. The sequence is that of Potassium-transporting ATPase ATP-binding subunit from Shigella boydii serotype 4 (strain Sb227).